The primary structure comprises 588 residues: ATP-dependent lipid A-core flippase (588 aa).

6 helical membrane passes run 23–43, 56–76, 141–161, 162–182, 257–277, and 278–298; these read FWPV…IDAG, FITI…IGIT, DALT…TVMM, VICW…GIIV, LVIA…STVI, and TISA…IKPM. One can recognise an ABC transmembrane type-1 domain in the interval 28–310; sequence LLGVLANILY…LTTLNATIQR (283 aa). The ABC transporter domain occupies 342-576; it reads IEFKHVYHAY…DGHYAQLYKV (235 aa). Residue 375–382 coordinates ATP; that stretch reads GHSGSGKT.

The protein belongs to the ABC transporter superfamily. Lipid exporter (TC 3.A.1.106) family. Homodimer.

It is found in the cell inner membrane. The enzyme catalyses ATP + H2O + lipid A-core oligosaccharideSide 1 = ADP + phosphate + lipid A-core oligosaccharideSide 2.. Functionally, involved in lipopolysaccharide (LPS) biosynthesis. Translocates lipid A-core from the inner to the outer leaflet of the inner membrane. Transmembrane domains (TMD) form a pore in the inner membrane and the ATP-binding domain (NBD) is responsible for energy generation. This chain is ATP-dependent lipid A-core flippase, found in Legionella pneumophila subsp. pneumophila (strain Philadelphia 1 / ATCC 33152 / DSM 7513).